Here is a 295-residue protein sequence, read N- to C-terminus: Small ribosomal subunit protein uS2 (295 aa).

The interval 260-295 (KQAKKFSKTKNIDEETNTEFEQALNDADENKNSDNA) is disordered.

Belongs to the universal ribosomal protein uS2 family.

The protein is Small ribosomal subunit protein uS2 of Rickettsia felis (strain ATCC VR-1525 / URRWXCal2) (Rickettsia azadi).